The sequence spans 429 residues: Histidinol dehydrogenase (429 aa).

Positions 130, 191, and 214 each coordinate NAD(+). 3 residues coordinate substrate: Ser-237, Gln-259, and His-262. The Zn(2+) site is built by Gln-259 and His-262. Active-site proton acceptor residues include Glu-327 and His-328. Substrate-binding residues include His-328, Asp-361, Glu-415, and His-420. Zn(2+) is bound at residue Asp-361. His-420 is a binding site for Zn(2+).

It belongs to the histidinol dehydrogenase family. The cofactor is Zn(2+).

The catalysed reaction is L-histidinol + 2 NAD(+) + H2O = L-histidine + 2 NADH + 3 H(+). It participates in amino-acid biosynthesis; L-histidine biosynthesis; L-histidine from 5-phospho-alpha-D-ribose 1-diphosphate: step 9/9. Functionally, catalyzes the sequential NAD-dependent oxidations of L-histidinol to L-histidinaldehyde and then to L-histidine. This chain is Histidinol dehydrogenase, found in Nitrobacter winogradskyi (strain ATCC 25391 / DSM 10237 / CIP 104748 / NCIMB 11846 / Nb-255).